Here is a 164-residue protein sequence, read N- to C-terminus: UPF0178 protein RPD_2254 (164 aa).

The protein belongs to the UPF0178 family.

This chain is UPF0178 protein RPD_2254, found in Rhodopseudomonas palustris (strain BisB5).